Consider the following 171-residue polypeptide: Shikimate kinase (171 aa).

14-19 serves as a coordination point for ATP; sequence GAGKST. Serine 18 lines the Mg(2+) pocket. The substrate site is built by aspartate 36, arginine 60, and glycine 82. Arginine 120 is a binding site for ATP. Arginine 139 is a binding site for substrate. Glutamine 156 contributes to the ATP binding site.

This sequence belongs to the shikimate kinase family. Monomer. Requires Mg(2+) as cofactor.

Its subcellular location is the cytoplasm. It carries out the reaction shikimate + ATP = 3-phosphoshikimate + ADP + H(+). Its pathway is metabolic intermediate biosynthesis; chorismate biosynthesis; chorismate from D-erythrose 4-phosphate and phosphoenolpyruvate: step 5/7. Catalyzes the specific phosphorylation of the 3-hydroxyl group of shikimic acid using ATP as a cosubstrate. The sequence is that of Shikimate kinase from Shewanella loihica (strain ATCC BAA-1088 / PV-4).